The sequence spans 134 residues: Profilin-1 (134 aa).

The cysteines at positions 13 and 118 are disulfide-linked. The short motif at 84–100 is the Involved in PIP2 interaction element; sequence AVIRGKKGSGGITIKKT. At T114 the chain carries Phosphothreonine.

Belongs to the profilin family. As to quaternary structure, occurs in many kinds of cells as a complex with monomeric actin in a 1:1 ratio. Post-translationally, phosphorylated by MAP kinases.

It localises to the cytoplasm. The protein localises to the cytoskeleton. In terms of biological role, binds to actin and affects the structure of the cytoskeleton. At high concentrations, profilin prevents the polymerization of actin, whereas it enhances it at low concentrations. The chain is Profilin-1 from Olea europaea (Common olive).